A 147-amino-acid chain; its full sequence is Large ribosomal subunit protein uL13 (147 aa).

This sequence belongs to the universal ribosomal protein uL13 family. As to quaternary structure, part of the 50S ribosomal subunit.

Functionally, this protein is one of the early assembly proteins of the 50S ribosomal subunit, although it is not seen to bind rRNA by itself. It is important during the early stages of 50S assembly. This chain is Large ribosomal subunit protein uL13, found in Arthrobacter sp. (strain FB24).